Reading from the N-terminus, the 542-residue chain is DM7 family protein CG15333 (542 aa).

Belongs to the DM7 family.

The chain is DM7 family protein CG15333 from Drosophila melanogaster (Fruit fly).